Reading from the N-terminus, the 224-residue chain is UPF0758 protein Tbd_2588 (224 aa).

Residues Ala-102–Leu-224 form the MPN domain. Zn(2+) is bound by residues His-173, His-175, and Asp-186. Positions His-173–Asp-186 match the JAMM motif motif.

Belongs to the UPF0758 family.

The polypeptide is UPF0758 protein Tbd_2588 (Thiobacillus denitrificans (strain ATCC 25259 / T1)).